The sequence spans 288 residues: Store-operated calcium entry regulator STIMATE (288 aa).

Topologically, residues 1 to 28 are cytoplasmic; sequence MQGPGGNVSRGLPGGPASTVASGAGRCE. Transmembrane regions (helical) follow at residues 29 to 49, 69 to 89, and 102 to 122; these read SGAL…VVAF, IWFL…FANV, and LYLI…YVGV. Positions 149–153 match the GXXXG motif motif; that stretch reads GAWVG. 2 consecutive transmembrane segments (helical) span residues 156–176 and 194–214; these read ALYI…LLIL and LAIV…WVVD. Residues 215-288 lie on the Cytoplasmic side of the membrane; it reads NFLMRKGKTK…KKKHRFGLPV (74 aa). The tract at residues 228 to 288 is disordered; sequence EERGANQDSR…KKKHRFGLPV (61 aa). A required for localization in the endoplasmic reticulum region spans residues 241–246; it reads KVRYRR. Residues 261-272 are compositionally biased toward acidic residues; the sequence is ADDEMEESDAEE. The segment covering 277–288 has biased composition (basic residues); sequence PVKKKHRFGLPV.

It belongs to the STIMATE family. Homooligomer. Interacts with STIM1.

Its subcellular location is the endoplasmic reticulum membrane. In terms of biological role, acts as a regulator of store-operated Ca(2+) entry (SOCE) at junctional sites that connect the endoplasmic reticulum (ER) and plasma membrane (PM), called ER-plasma membrane (ER-PM) junction or cortical ER. SOCE is a Ca(2+) influx following depletion of intracellular Ca(2+) stores. Acts by interacting with STIM1, promoting STIM1 conformational switch. Involved in STIM1 relocalization to ER-PM junctions. Contributes to the maintenance and reorganization of store-dependent ER-PM junctions. The polypeptide is Store-operated calcium entry regulator STIMATE (Rattus norvegicus (Rat)).